Consider the following 194-residue polypeptide: UPF0301 protein FTH_1193 (194 aa).

This sequence belongs to the UPF0301 (AlgH) family.

The protein is UPF0301 protein FTH_1193 of Francisella tularensis subsp. holarctica (strain OSU18).